Reading from the N-terminus, the 503-residue chain is MAEGSQSAPEAGNDMGNDDAIGGNVSKYIVLPTGYCGQPKKGHLIFDACFESGNLGRVDQVSEFEYDLFIRPDTCNPRFRVWFNFTVENVKESQRVIFNIVNFSKTKSLYRDGMAPMVKSTSRPKWQRLPPKNVYYYRCPDHRKNYVMSFAFCFDREEDIYQFAYCYPYTYTRFQHYLDSLQKRNMDYFFREQLGQSVQQRKLDLLTITSPDNLREGAEQKVVFITGRVHPGETPSSFVCQGIIDFLVSQHPIACVLREYLVFKIAPMLNPDGVYLGNYRCSLMGFDLNRHWLDPSPWVHPTLHGVKQLIVQMYNDPKTSLEFYIDIHAHSTMMNGFMYGNIFEDEERFQRQAIFPKLLCQNAEDFSYSSTSFNRDAVKAGTGRRFLGGLLDHTSYCYTLEVSFYSYIISGTTAAVPYTEEAYMKLGRNVARTFLDYYRLNPVVEKVAIPMPRLRNKEIEVQRRKEKSPPYKHPLLRGPASNYPNSKGDKKSSVNHKDPSTPF.

Residues 167–438 enclose the Peptidase M14 domain; sequence YPYTYTRFQH…NVARTFLDYY (272 aa). 3 residues coordinate Zn(2+): His230, Glu233, and His328. Glu401 acts as the Proton donor/acceptor in catalysis. Basic and acidic residues-rich tracts occupy residues 459 to 469 and 487 to 503; these read IEVQRRKEKSP and KGDK…STPF. A disordered region spans residues 459-503; sequence IEVQRRKEKSPPYKHPLLRGPASNYPNSKGDKKSSVNHKDPSTPF.

It belongs to the peptidase M14 family. Interacts with MYLK. Zn(2+) serves as cofactor.

It is found in the cytoplasm. The protein localises to the cytosol. Its subcellular location is the cytoskeleton. It localises to the microtubule organizing center. The protein resides in the centrosome. It is found in the centriole. The protein localises to the golgi apparatus. Its subcellular location is the cilium basal body. It catalyses the reaction (L-glutamyl)(n+1)-gamma-L-glutamyl-L-glutamyl-[protein] + H2O = (L-glutamyl)(n)-gamma-L-glutamyl-L-glutamyl-[protein] + L-glutamate. The catalysed reaction is C-terminal L-alpha-aminoacyl-L-glutamyl-L-glutamyl-[tubulin] + H2O = C-terminal L-alpha-aminoacyl-L-glutamyl-[tubulin] + L-glutamate. In terms of biological role, metallocarboxypeptidase that mediates protein deglutamylation of tubulin and non-tubulin target proteins. Catalyzes the removal of polyglutamate side chains present on the gamma-carboxyl group of glutamate residues within the C-terminal tail of tubulin protein. Specifically cleaves tubulin long-side-chains, while it is not able to remove the branching point glutamate. Also catalyzes the removal of polyglutamate residues from the carboxy-terminus of non-tubulin proteins such as MYLK. Mediates the deglutamylation of nucleotidyltransferase CGAS, leading to CGAS antiviral defense response activation. Involved in KLF4 deglutamylation which promotes KLF4 proteasome-mediated degradation, thereby negatively regulating cell pluripotency maintenance and embryogenesis. In Homo sapiens (Human), this protein is Cytosolic carboxypeptidase 6.